Here is a 924-residue protein sequence, read N- to C-terminus: TBC1 domain family member 30 (924 aa).

Residues 1–11 (MDVLPTGGGRP) are compositionally biased toward gly residues. 2 disordered regions span residues 1 to 76 (MDVL…GRTS) and 94 to 134 (EEEE…RSGA). Over residues 47–59 (GAAERPRRSRDTW) the composition is skewed to basic and acidic residues. In terms of domain architecture, Rab-GAP TBC spans 249-457 (GIPKEWRRKV…KIWDSVFFEG (209 aa)). 3 disordered regions span residues 541–564 (KPTS…PDDE), 776–806 (GCTA…PVFG), and 838–924 (HPPC…TKKR). Positions 555-564 (SDEENDPDDE) are enriched in acidic residues. Ser800 is subject to Phosphoserine. Positions 858–870 (TSKAPQGSNSKTP) are enriched in polar residues. Residues 914–924 (PGGGNSGTKKR) are compositionally biased toward gly residues.

The protein localises to the cell membrane. In terms of biological role, may act as a GTPase-activating protein for Rab family protein(s). This Homo sapiens (Human) protein is TBC1 domain family member 30 (TBC1D30).